The chain runs to 234 residues: Bradykinin-releasing enzyme KR-E-1 (234 aa).

Positions 1–225 constitute a Peptidase S1 domain; the sequence is VIGGDECNIN…YSDWIQSIIA (225 aa). 6 disulfides stabilise this stretch: cysteine 7-cysteine 139, cysteine 26-cysteine 42, cysteine 74-cysteine 232, cysteine 118-cysteine 186, cysteine 150-cysteine 165, and cysteine 176-cysteine 201. The N-linked (GlcNAc...) asparagine glycan is linked to asparagine 20. Residues histidine 41 and aspartate 86 each act as charge relay system in the active site. Serine 180 functions as the Charge relay system in the catalytic mechanism.

This sequence belongs to the peptidase S1 family. Snake venom subfamily. In terms of assembly, monomer. As to expression, expressed by the venom gland.

It localises to the secreted. Bradykinin-releasing enzyme. Releases bradykinin from bovine HMW kininogen. Has anticoagulant activity. Increases permeability of capillaries by intradermal injection into rabbits. The chain is Bradykinin-releasing enzyme KR-E-1 from Gloydius ussuriensis (Ussuri mamushi).